A 37-amino-acid chain; its full sequence is Large ribosomal subunit protein bL36 (37 aa).

The protein belongs to the bacterial ribosomal protein bL36 family.

The chain is Large ribosomal subunit protein bL36 from Bacillus pumilus (strain SAFR-032).